A 530-amino-acid chain; its full sequence is MSRSSPRALPPGALPRPLPAAPAAVQRALLPPWPRRAGRRWPASPLGMKVFRRKALVLCAGYALLLVLTMLNLLDYKWHKEPLQQCNPDGPLGAAVGAAGAGWGRPGSPPAAPPRAHSRMDPRTPYRPPAAGVGAVPAAAAGSAGAAASLGNATRGTRGGGDKRQLVYVFTTWRSGSSFFGELFNQNPEVFFLYEPVWHVWQKLYPGDAVSLQGAARDMLSALYRCDLSVFQLYSPAGSGGRNLTTLGIFGAATNKVVCSSPLCPAYRKEVVGLVDDRVCKKCPPQRLARFEEECRKYRTLVIKGVRVFDVAVLAPLLKDPALDLKVIHLVRDPRAVASSRIRSRHGLIRESLQVVRSRDPRAHRMPFLEAAGHKLGAKKEGMGGPADYHALGAMEVICNSMAKTLQTALQPPDWLQGHYLVVRYEDLVGDPVKTLRRVYDFVGLLVSPEMEQFALNMTSGSGSSSKPFVVSARNATQAANAWRTALTFQQIKQVEEFCYQPMAVLGYERVNSPEEVKDLSKTLLRKPRL.

The segment at 1 to 20 (MSRSSPRALPPGALPRPLPA) is disordered. Residues 1–54 (MSRSSPRALPPGALPRPLPAAPAAVQRALLPPWPRRAGRRWPASPLGMKVFRRK) are Cytoplasmic-facing. Positions 8–20 (ALPPGALPRPLPA) are enriched in pro residues. The helical; Signal-anchor for type II membrane protein transmembrane segment at 55–75 (ALVLCAGYALLLVLTMLNLLD) threads the bilayer. Residues 76–530 (YKWHKEPLQQ…SKTLLRKPRL (455 aa)) are Lumenal-facing. The tract at residues 97-128 (GAAGAGWGRPGSPPAAPPRAHSRMDPRTPYRP) is disordered. 3'-phosphoadenylyl sulfate is bound at residue 173–179 (WRSGSSF). N243 carries an N-linked (GlcNAc...) asparagine glycan. 3'-phosphoadenylyl sulfate is bound at residue 332–340 (RDPRAVASS). Residues N457 and N475 are each glycosylated (N-linked (GlcNAc...) asparagine).

Belongs to the sulfotransferase 1 family. Gal/GlcNAc/GalNAc subfamily. In terms of assembly, homodimer; disulfide-linked. Homodimerization is not essential for enzyme activity. In terms of tissue distribution, in brain, it is expressed in pyramidal cells in the CA3 subregion of the hippocampus, cerebellar nucleus and Purkinje cells. Expressed in peripheral lymph nodes.

Its subcellular location is the golgi apparatus. It localises to the trans-Golgi network membrane. It catalyses the reaction 3-O-{N-acetyl-beta-D-glucosaminyl-(1-&gt;3)-beta-D-galactosyl-(1-&gt;3)-N-acetyl-alpha-D-galactosaminyl}-L-threonyl-[protein] + 3'-phosphoadenylyl sulfate = 3-O-{6-O-sulfo-N-acetyl-beta-D-glucosaminyl-(1-&gt;3)-beta-D-galactosyl-(1-&gt;3)-N-acetyl-alpha-D-galactosaminyl}-L-threonyl-[protein] + adenosine 3',5'-bisphosphate + H(+). The catalysed reaction is 3-O-{N-acetyl-beta-D-glucosaminyl-(1-&gt;3)-beta-D-galactosyl-(1-&gt;3)-N-acetyl-alpha-D-galactosaminyl}-L-seryl-[protein] + 3'-phosphoadenylyl sulfate = 3-O-{6-O-sulfo-N-acetyl-beta-D-glucosaminyl-(1-&gt;3)-beta-D-galactosyl-(1-&gt;3)-N-acetyl-alpha-D-galactosaminyl}-L-seryl-[protein] + adenosine 3',5'-bisphosphate + H(+). It carries out the reaction a 3-O-{beta-D-galactosyl-(1-&gt;3)-[N-acetyl-beta-D-glucosaminyl-(1-&gt;6)]-N-acetyl-alpha-D-galactosaminyl}-L-threonyl-[protein] + 3'-phosphoadenylyl sulfate = 3-O-{beta-D-galactosyl-(1-&gt;3)-[6-O-sulfo-N-acetyl-beta-D-glucosaminyl-(1-&gt;6)]-N-acetyl-alpha-D-galactosaminyl}-L-threonyl-[protein] + adenosine 3',5'-bisphosphate + H(+). The enzyme catalyses 3-O-{beta-D-galactosyl-(1-&gt;3)-[N-acetyl-beta-D-glucosaminyl-(1-&gt;6)]-N-acetyl-alpha-D-galactosaminyl}-L-seryl-[protein] + 3'-phosphoadenylyl sulfate = 3-O-{beta-D-galactosyl-(1-&gt;3)-[6-O-sulfo-N-acetyl-beta-D-glucosaminyl-(1-&gt;6)]-N-acetyl-alpha-D-galactosaminyl}-L-seryl-[protein] + adenosine 3',5'-bisphosphate + H(+). It participates in protein modification; carbohydrate sulfation. Sulfotransferase that utilizes 3'-phospho-5'-adenylyl sulfate (PAPS) as sulfonate donor to catalyze the transfer of sulfate to position 6 of non-reducing N-acetylglucosamine (GlcNAc) residues within keratan-like structures on N-linked glycans and within mucin-associated glycans that can ultimately serve as SELL ligands. SELL ligands are present in high endothelial cells (HEVs) and play a central role in lymphocyte homing at sites of inflammation. Participates in biosynthesis of the SELL ligand sialyl 6-sulfo Lewis X and in lymphocyte homing to Peyer patches. Has no activity toward O-linked sugars. Its substrate specificity may be influenced by its subcellular location. Sulfates GlcNAc residues at terminal, non-reducing ends of oligosaccharide chains. The sequence is that of Carbohydrate sulfotransferase 2 (Chst2) from Mus musculus (Mouse).